The following is a 94-amino-acid chain: MPKLAVVLLVLLILPLSYFDAAGGQAVQWDRRGNGLARYLQRGDRDVRECQVDTPGSSWGKCCMTRMCGTMCCSRSVCTCVYHWRRGHGCSCPG.

Residues 1-24 form the signal peptide; sequence MPKLAVVLLVLLILPLSYFDAAGG. Residues 25–45 constitute a propeptide that is removed on maturation; the sequence is QAVQWDRRGNGLARYLQRGDR. Intrachain disulfides connect Cys-63/Cys-72, Cys-68/Cys-80, Cys-73/Cys-90, and Cys-78/Cys-92.

The protein belongs to the conotoxin D superfamily. Hetero-, homo- or pseudo-homodimer (identical sequence, different post-translational modifications). Expressed by the venom duct.

Its subcellular location is the secreted. In terms of biological role, alpha-conotoxins act on postsynaptic membranes, they bind to the nicotinic acetylcholine receptors (nAChR) and thus inhibit them. Through its two C-terminal domains, this homodimeric protein would bind to two nAChR allosteric sites, located outside the nAChR C-loop of the principal binding face and at the adjacent binding interface in a clockwise direction. This toxin specifically blocks mammalian neuronal nAChR of the alpha-7/CHRNA7, alpha-3-beta-2/CHRNA3-CHRNB2 and alpha-4-beta-2/CHRNA4-CHRNB2 subtypes. In Conus capitaneus (Captain cone), this protein is Alpha-conotoxin-like Cp20.2.